The primary structure comprises 126 residues: Aspartate 1-decarboxylase (126 aa).

Ser25 functions as the Schiff-base intermediate with substrate; via pyruvic acid in the catalytic mechanism. A Pyruvic acid (Ser) modification is found at Ser25. Substrate is bound at residue Thr57. The active-site Proton donor is Tyr58. 73–75 (GAA) serves as a coordination point for substrate.

It belongs to the PanD family. As to quaternary structure, heterooctamer of four alpha and four beta subunits. Pyruvate is required as a cofactor. Is synthesized initially as an inactive proenzyme, which is activated by self-cleavage at a specific serine bond to produce a beta-subunit with a hydroxyl group at its C-terminus and an alpha-subunit with a pyruvoyl group at its N-terminus.

The protein resides in the cytoplasm. It catalyses the reaction L-aspartate + H(+) = beta-alanine + CO2. It functions in the pathway cofactor biosynthesis; (R)-pantothenate biosynthesis; beta-alanine from L-aspartate: step 1/1. Its function is as follows. Catalyzes the pyruvoyl-dependent decarboxylation of aspartate to produce beta-alanine. This chain is Aspartate 1-decarboxylase, found in Proteus mirabilis (strain HI4320).